The following is a 302-amino-acid chain: D-alanine--D-alanine ligase (302 aa).

The ATP-grasp domain occupies 99–298; it reads KRLFVAEGIP…FEQLIQRIID (200 aa). 128–183 provides a ligand contact to ATP; the sequence is LAALGSPVVVKPADGGSTVGVTIAREAGHLPEAVRLALQYSPQVLIEQYIPGQEIT. Mg(2+)-binding residues include Asp-252, Glu-265, and Asn-267.

The protein belongs to the D-alanine--D-alanine ligase family. Requires Mg(2+) as cofactor. The cofactor is Mn(2+).

The protein resides in the cytoplasm. The catalysed reaction is 2 D-alanine + ATP = D-alanyl-D-alanine + ADP + phosphate + H(+). Its pathway is cell wall biogenesis; peptidoglycan biosynthesis. Cell wall formation. This is D-alanine--D-alanine ligase from Gloeobacter violaceus (strain ATCC 29082 / PCC 7421).